Here is a 256-residue protein sequence, read N- to C-terminus: Thiazole synthase (256 aa).

Catalysis depends on Lys-95, which acts as the Schiff-base intermediate with DXP. 1-deoxy-D-xylulose 5-phosphate contacts are provided by residues Gly-156, 182–183 (AG), and 204–205 (NT).

The protein belongs to the ThiG family. In terms of assembly, homotetramer. Forms heterodimers with either ThiH or ThiS.

The protein localises to the cytoplasm. It carries out the reaction [ThiS sulfur-carrier protein]-C-terminal-Gly-aminoethanethioate + 2-iminoacetate + 1-deoxy-D-xylulose 5-phosphate = [ThiS sulfur-carrier protein]-C-terminal Gly-Gly + 2-[(2R,5Z)-2-carboxy-4-methylthiazol-5(2H)-ylidene]ethyl phosphate + 2 H2O + H(+). Its pathway is cofactor biosynthesis; thiamine diphosphate biosynthesis. Its function is as follows. Catalyzes the rearrangement of 1-deoxy-D-xylulose 5-phosphate (DXP) to produce the thiazole phosphate moiety of thiamine. Sulfur is provided by the thiocarboxylate moiety of the carrier protein ThiS. In vitro, sulfur can be provided by H(2)S. The polypeptide is Thiazole synthase (Escherichia fergusonii (strain ATCC 35469 / DSM 13698 / CCUG 18766 / IAM 14443 / JCM 21226 / LMG 7866 / NBRC 102419 / NCTC 12128 / CDC 0568-73)).